The chain runs to 308 residues: PAK4-inhibitor inka1 (308 aa).

The disordered stretch occupies residues glutamate 81–serine 105. A compositionally biased stretch (low complexity) spans serine 87–glutamate 98. Inka box regions lie at residues aspartate 164 to glutamate 201 and aspartate 281 to isoleucine 308.

The protein belongs to the INKA family. Interacts with pak4/pak5.

The protein localises to the nucleus. It is found in the cytoplasm. Inhibitor of the serine/threonine-protein kinase pak4/pak5. Acts by binding pak4/pak5 in a substrate-like manner, inhibiting the protein kinase activity. Required for the proper migration of neural crest cells during embryonic development, probably by inhibiting pak4/pak5. The polypeptide is PAK4-inhibitor inka1 (Danio rerio (Zebrafish)).